The sequence spans 141 residues: Nucleoside diphosphate kinase (141 aa).

Positions 11, 59, 87, 93, 104, and 114 each coordinate ATP. Residue histidine 117 is the Pros-phosphohistidine intermediate of the active site.

It belongs to the NDK family. In terms of assembly, homotetramer. Mg(2+) is required as a cofactor.

It is found in the cytoplasm. The enzyme catalyses a 2'-deoxyribonucleoside 5'-diphosphate + ATP = a 2'-deoxyribonucleoside 5'-triphosphate + ADP. The catalysed reaction is a ribonucleoside 5'-diphosphate + ATP = a ribonucleoside 5'-triphosphate + ADP. In terms of biological role, major role in the synthesis of nucleoside triphosphates other than ATP. The ATP gamma phosphate is transferred to the NDP beta phosphate via a ping-pong mechanism, using a phosphorylated active-site intermediate. This is Nucleoside diphosphate kinase from Bdellovibrio bacteriovorus (strain ATCC 15356 / DSM 50701 / NCIMB 9529 / HD100).